A 335-amino-acid polypeptide reads, in one-letter code: Holliday junction branch migration complex subunit RuvB (335 aa).

A large ATPase domain (RuvB-L) region spans residues Ala-4–Tyr-183. Residues Arg-23, Gly-64, Lys-67, Thr-68, Thr-69, Glu-130–Tyr-132, Arg-173, Tyr-183, and Arg-220 contribute to the ATP site. Thr-68 is a Mg(2+) binding site. Residues Pro-184–Asn-254 form a small ATPAse domain (RuvB-S) region. The segment at Thr-257–Ile-335 is head domain (RuvB-H). DNA contacts are provided by Arg-293, Arg-312, and Arg-317.

This sequence belongs to the RuvB family. As to quaternary structure, homohexamer. Forms an RuvA(8)-RuvB(12)-Holliday junction (HJ) complex. HJ DNA is sandwiched between 2 RuvA tetramers; dsDNA enters through RuvA and exits via RuvB. An RuvB hexamer assembles on each DNA strand where it exits the tetramer. Each RuvB hexamer is contacted by two RuvA subunits (via domain III) on 2 adjacent RuvB subunits; this complex drives branch migration. In the full resolvosome a probable DNA-RuvA(4)-RuvB(12)-RuvC(2) complex forms which resolves the HJ.

The protein localises to the cytoplasm. It carries out the reaction ATP + H2O = ADP + phosphate + H(+). Functionally, the RuvA-RuvB-RuvC complex processes Holliday junction (HJ) DNA during genetic recombination and DNA repair, while the RuvA-RuvB complex plays an important role in the rescue of blocked DNA replication forks via replication fork reversal (RFR). RuvA specifically binds to HJ cruciform DNA, conferring on it an open structure. The RuvB hexamer acts as an ATP-dependent pump, pulling dsDNA into and through the RuvAB complex. RuvB forms 2 homohexamers on either side of HJ DNA bound by 1 or 2 RuvA tetramers; 4 subunits per hexamer contact DNA at a time. Coordinated motions by a converter formed by DNA-disengaged RuvB subunits stimulates ATP hydrolysis and nucleotide exchange. Immobilization of the converter enables RuvB to convert the ATP-contained energy into a lever motion, pulling 2 nucleotides of DNA out of the RuvA tetramer per ATP hydrolyzed, thus driving DNA branch migration. The RuvB motors rotate together with the DNA substrate, which together with the progressing nucleotide cycle form the mechanistic basis for DNA recombination by continuous HJ branch migration. Branch migration allows RuvC to scan DNA until it finds its consensus sequence, where it cleaves and resolves cruciform DNA. In Baumannia cicadellinicola subsp. Homalodisca coagulata, this protein is Holliday junction branch migration complex subunit RuvB.